The chain runs to 803 residues: Palmitoyl thioesterase CPT1C (803 aa).

Topologically, residues 1-52 (MAEAHQAVGFRPSLTSDGAEVELSAPVLQEIYLSGLRSWKRHLSRFWNDFLT) are cytoplasmic. A helical membrane pass occupies residues 53-75 (GVFPASPLSWLFLFSAIQLAWFL). At 76-103 (QLDPSLGLMEKIKELLPDWGGQHHGLRG) the chain is on the lumenal side. The chain crosses the membrane as a helical span at residues 104–126 (VLAAALFASCLWGALIFTLHVAL). Residues 127–803 (RLLLSYHGWL…SKASMTSTDF (677 aa)) are Cytoplasmic-facing. H470 (proton acceptor) is an active-site residue. 552-564 (GKSFIRRCHLSSD) lines the CoA pocket. (R)-carnitine contacts are provided by Y586, S588, and T599. Residues 761–803 (LFQAGQHFKRRFRGSGKENSRHRCGFLSRQTGASKASMTSTDF) form a required for interaction with GRIA1 region. The segment at 772 to 803 (FRGSGKENSRHRCGFLSRQTGASKASMTSTDF) is disordered. Polar residues predominate over residues 788–803 (SRQTGASKASMTSTDF).

This sequence belongs to the carnitine/choline acetyltransferase family. Peripherally associated with AMPAR complex. AMPAR complex consists of an inner core made of 4 pore-forming GluA/GRIA proteins (GRIA1, GRIA2, GRIA3 and GRIA4) and 4 major auxiliary subunits arranged in a twofold symmetry. One of the two pairs of distinct binding sites is occupied either by CNIH2, CNIH3 or CACNG2, CACNG3. The other harbors CACNG2, CACNG3, CACNG4, CACNG8 or GSG1L. This inner core of AMPAR complex is complemented by outer core constituents binding directly to the GluA/GRIA proteins at sites distinct from the interaction sites of the inner core constituents. Outer core constituents include at least PRRT1, PRRT2, CKAMP44/SHISA9, FRRS1L and NRN1. The proteins of the inner and outer core serve as a platform for other, more peripherally associated AMPAR constituents, including CPT1C. Alone or in combination, these auxiliary subunits control the gating and pharmacology of the AMPAR complex and profoundly impact their biogenesis and protein processing. Interacts with SACM1L; the interaction regulates SACM1L phosphatidylinositol-3-phosphatase activity and translocation to endoplasmic reticulum/trans Golgi network in a malonyl-CoA dependent manner. Interacts with ATL1. Expressed predominantly in brain and testis. Expressed in motor neurons.

Its subcellular location is the cell projection. The protein resides in the dendrite. It is found in the axon. It localises to the endoplasmic reticulum membrane. The enzyme catalyses S-hexadecanoyl-L-cysteinyl-[protein] + H2O = L-cysteinyl-[protein] + hexadecanoate + H(+). In terms of biological role, palmitoyl thioesterase specifically expressed in the endoplasmic reticulum of neurons. Modulates the trafficking of the glutamate receptor, AMPAR, to plasma membrane through depalmitoylation of GRIA1. Also regulates AMPR trafficking through the regulation of SACM1L phosphatidylinositol-3-phosphatase activity by interaction in a malonyl-CoA dependent manner. Binds malonyl-CoA and couples malonyl-CoA to ceramide levels, necessary for proper spine maturation and contributing to systemic energy homeostasis and appetite control. Binds to palmitoyl-CoA, but does not have carnitine palmitoyltransferase 1 catalytic activity or at very low levels. The sequence is that of Palmitoyl thioesterase CPT1C from Homo sapiens (Human).